The chain runs to 213 residues: Cytochrome b-c1 complex subunit Rieske, mitochondrial (213 aa).

A mitochondrion-targeting transit peptide spans 1–29 (MSSLAFRTLRNGLGLKSSVRALSTTTTTL). The Mitochondrial matrix portion of the chain corresponds to 30–47 (SNYQQPDYSSYLNNKSGQ). A helical transmembrane segment spans residues 48–77 (GSRNFTYFMVGSMGLLSAAGAKSTVEAFLS). Over 78 to 213 (SFAASADVLA…FTDDETLLVG (136 aa)) the chain is Mitochondrial intermembrane. One can recognise a Rieske domain in the interval 116 to 211 (RHRTADEIEE…YDFTDDETLL (96 aa)). 4 residues coordinate [2Fe-2S] cluster: C156, H158, C175, and H178. A disulfide bond links C161 and C177.

This sequence belongs to the Rieske iron-sulfur protein family. In terms of assembly, component of the ubiquinol-cytochrome c oxidoreductase (cytochrome b-c1 complex, complex III, CIII), a multisubunit enzyme composed of 10 subunits. The complex is composed of 3 respiratory subunits cytochrome b (COB), cytochrome c1 (CYT1) and Rieske protein (RIP1), 2 core protein subunits COR1 and QCR2, and 5 low-molecular weight protein subunits QCR6, QCR7, QCR8, QCR9 and QCR10. The complex exists as an obligatory dimer and forms supercomplexes (SCs) in the inner mitochondrial membrane with a monomer or a dimer of cytochrome c oxidase (complex IV, CIV), resulting in 2 different assemblies (supercomplexes III(2)IV and III(2)IV(2)). [2Fe-2S] cluster serves as cofactor.

The protein resides in the mitochondrion inner membrane. It catalyses the reaction a quinol + 2 Fe(III)-[cytochrome c](out) = a quinone + 2 Fe(II)-[cytochrome c](out) + 2 H(+)(out). In terms of biological role, component of the ubiquinol-cytochrome c oxidoreductase, a multisubunit transmembrane complex that is part of the mitochondrial electron transport chain which drives oxidative phosphorylation. The complex plays an important role in the uptake of multiple carbon sources present in different host niches. The chain is Cytochrome b-c1 complex subunit Rieske, mitochondrial from Candida albicans (strain SC5314 / ATCC MYA-2876) (Yeast).